Reading from the N-terminus, the 616-residue chain is Chaperone protein HscA (616 aa).

It belongs to the heat shock protein 70 family.

Its function is as follows. Chaperone involved in the maturation of iron-sulfur cluster-containing proteins. Has a low intrinsic ATPase activity which is markedly stimulated by HscB. Involved in the maturation of IscU. The polypeptide is Chaperone protein HscA (Escherichia coli O7:K1 (strain IAI39 / ExPEC)).